The sequence spans 151 residues: Mating pheromone 3 (151 aa).

The N-terminal stretch at 1 to 16 (MKAIFIILAILMVTQA) is a signal peptide. Positions 17-52 (FKMTSKVNTKLQSQIQSKFQSKNKLASTFQTSSQLK) are excised as a propeptide.

Its subcellular location is the secreted. In terms of biological role, mating ciliate pheromones (or gamones) are diffusible extracellular communication signals that distinguish different intraspecific classes of cells commonly referred to as 'mating types'. They prepare the latter for conjugation by changing their cell surface properties. This chain is Mating pheromone 3 (PHR3), found in Euplotoides octocarinatus (Freshwater ciliate).